Consider the following 532-residue polypeptide: MEGDSYHNATTVNGTPVNHQPLERHRLWEVITIAAVTAVVSLITIVGNVLVMISFKVNSQLKTVNNYYLLSLACADLIIGIFSMNLYTTYILMGRWALGSLACDLWLALDYVASNASVMNLLVISFDRYFSITRPLTYRAKRTPKRAGIMIGLAWLISFILWAPAILCWQYLVGKRTVPLDECQIQFLSEPTITFGTAIAAFYIPVSVMTILYCRIYRETEKRTKDLADLQGSDSVTKAEKRKPAHRALFRSCLRCPRPTLAQRERNQASWSSSRRSTSTTGKPSQATGPSANWAKAEQLTTCSSYPSSEDEDKPATDPVLQVVYKSQGKESPGEEFSAEETEETFVKAETEKSDYDTPNYLLSPAAAHRPKSQKCVAYKFRLVVKADGNQETNNGCHKVKIMPCPFPVAKEPSTKGLNPNPSHQMTKRKRVVLVKERKAAQTLSAILLAFIITWTPYNIMVLVSTFCDKCVPVTLWHLGYWLCYVNSTVNPICYALCNRTFRKTFKMLLLCRWKKKKVEEKLYWQGNSKLP.

Residues 1–29 (MEGDSYHNATTVNGTPVNHQPLERHRLWE) lie on the Extracellular side of the membrane. A glycan (N-linked (GlcNAc...) asparagine) is linked at Asn8. Residues 30–53 (VITIAAVTAVVSLITIVGNVLVMI) form a helical membrane-spanning segment. Residues 54–66 (SFKVNSQLKTVNN) lie on the Cytoplasmic side of the membrane. A helical transmembrane segment spans residues 67–87 (YYLLSLACADLIIGIFSMNLY). Topologically, residues 88-104 (TTYILMGRWALGSLACD) are extracellular. A disulfide bridge connects residues Cys103 and Cys183. Residues 105–126 (LWLALDYVASNASVMNLLVISF) traverse the membrane as a helical segment. The Cytoplasmic segment spans residues 127–146 (DRYFSITRPLTYRAKRTPKR). The helical transmembrane segment at 147 to 169 (AGIMIGLAWLISFILWAPAILCW) threads the bilayer. Residues 170–191 (QYLVGKRTVPLDECQIQFLSEP) lie on the Extracellular side of the membrane. A helical transmembrane segment spans residues 192 to 214 (TITFGTAIAAFYIPVSVMTILYC). Residues 215–443 (RIYRETEKRT…LVKERKAAQT (229 aa)) are Cytoplasmic-facing. The segment at 262–294 (AQRERNQASWSSSRRSTSTTGKPSQATGPSANW) is disordered. Low complexity predominate over residues 270-281 (SWSSSRRSTSTT). A compositionally biased stretch (polar residues) spans 282-291 (GKPSQATGPS). A helical transmembrane segment spans residues 444 to 464 (LSAILLAFIITWTPYNIMVLV). Over 465–478 (STFCDKCVPVTLWH) the chain is Extracellular. Residues 479–498 (LGYWLCYVNSTVNPICYALC) traverse the membrane as a helical segment. At 499–532 (NRTFRKTFKMLLLCRWKKKKVEEKLYWQGNSKLP) the chain is on the cytoplasmic side. A phosphothreonine mark is found at Thr501 and Thr505.

This sequence belongs to the G-protein coupled receptor 1 family. Muscarinic acetylcholine receptor subfamily. CHRM5 sub-subfamily.

Its subcellular location is the cell membrane. The protein resides in the postsynaptic cell membrane. Functionally, the muscarinic acetylcholine receptor mediates various cellular responses, including inhibition of adenylate cyclase, breakdown of phosphoinositides and modulation of potassium channels through the action of G proteins. Primary transducing effect is Pi turnover. The chain is Muscarinic acetylcholine receptor M5 (CHRM5) from Homo sapiens (Human).